Consider the following 109-residue polypeptide: Large ribosomal subunit protein eL30 (109 aa).

The protein belongs to the eukaryotic ribosomal protein eL30 family.

This is Large ribosomal subunit protein eL30 from Methanopyrus kandleri (strain AV19 / DSM 6324 / JCM 9639 / NBRC 100938).